The primary structure comprises 415 residues: Membrane-bound ghrelin O-acyltransferase mboat4 (415 aa).

The Lumenal segment spans residues 1-6 (MIDLLW). Residues 7-28 (ISSDGHPQLFYQFINIPFAFLF) traverse the membrane as a helical segment. Topologically, residues 29–42 (HCLSSQGHLSIINR) are cytoplasmic. The helical transmembrane segment at 43 to 58 (YVYLAMGGFMLAIATM) threads the bilayer. Residues 59 to 61 (GPY) lie on the Lumenal side of the membrane. A helical transmembrane segment spans residues 62–78 (SSLLFLSAIKLLLLIHY). Residues 79–84 (IHPMHL) lie on the Cytoplasmic side of the membrane. The chain crosses the membrane as a helical span at residues 85–103 (HRWILGLQMCWQTCWHLYV). Topologically, residues 104-122 (QYQIYWLQEAPDSRLLLAI) are lumenal. Residues 123-138 (SALMLMTQRISSLSLD) form a helical membrane-spanning segment. Residues 139–193 (FQEGTISNQSILIPFLTYSLYFPALLGGPLCSFNAFVQSVERQHTSMTSYLGNLT) lie on the Cytoplasmic side of the membrane. The helical transmembrane segment at 194 to 214 (SKISQVIVLVWIKQLFSELLK) threads the bilayer. The Lumenal segment spans residues 215-227 (SATFNIDSVCLDV). Residues 228–247 (LWIWIFSLTLRLNYYAHWKM) traverse the membrane as a helical segment. The Cytoplasmic segment spans residues 248–312 (SECVNNAAGL…RKIVFNRTSR (65 aa)). Active-site residues include Asn-295 and His-326. A helical transmembrane segment spans residues 313 to 326 (SPLFMTFGFSALWH). Topologically, residues 327–328 (GL) are lumenal. A helical membrane pass occupies residues 329-345 (HPGQILGFLIWAVTVQA). Over 346-364 (DYKLHRFSHPKLNSLWRKR) the chain is Cytoplasmic. A helical transmembrane segment spans residues 365–385 (LYVCVNWAFTQLTVACVVVCV). Over 386-394 (ELQSLASVK) the chain is Lumenal. A helical membrane pass occupies residues 395–415 (LLWSSCIAVFPLLSALILIIL).

The protein belongs to the membrane-bound acyltransferase family. Monomer. Not glycosylated.

It is found in the endoplasmic reticulum membrane. It catalyses the reaction octanoyl-CoA + L-seryl-[protein] = O-octanoyl-L-seryl-[protein] + CoA. The enzyme catalyses decanoyl-CoA + L-seryl-[protein] = O-decanoyl-L-seryl-[protein] + CoA. It carries out the reaction L-seryl-[protein] + acetyl-CoA = O-acetyl-L-seryl-[protein] + CoA. The catalysed reaction is L-seryl-[protein] + butanoyl-CoA = O-butanoyl-L-seryl-[protein] + CoA. It catalyses the reaction pentanoyl-CoA + L-seryl-[protein] = O-pentanoyl-L-seryl-[protein] + CoA. The enzyme catalyses hexanoyl-CoA + L-seryl-[protein] = O-hexanoyl-L-seryl-[protein] + CoA. It carries out the reaction heptanoyl-CoA + L-seryl-[protein] = O-heptanoyl-L-seryl-[protein] + CoA. The catalysed reaction is nonanoyl-CoA + L-seryl-[protein] = O-nonanoyl-L-seryl-[protein] + CoA. It catalyses the reaction L-seryl-[protein] + dodecanoyl-CoA = O-dodecanoyl-L-seryl-[protein] + CoA. The enzyme catalyses L-seryl-[protein] + tetradecanoyl-CoA = O-tetradecanoyl-L-seryl-[protein] + CoA. It carries out the reaction a fatty acyl-CoA + L-seryl-[protein] = O-fatty acyl-L-seryl-[protein] + CoA. Its function is as follows. Catalyzes ghrelin acylation at 'Ser-3' using preferentially octanoyl-CoA, hexanoyl-CoA and decanoyl-CoA as acyl-CoA donors leading to ghrelin activity. In vitro uses also acyl-CoA donors of different lengths from short-chain (C2) to long-chain fatty acids (C16) knowing that acyl-CoA donors from butanoyl-CoA (C4) to dodecanoyl-CoA (C12) are more efficient compared to longer acyl-CoA donors, such as myristoyl-CoA (C14) and palmitoyl-CoA (C16) that are not efficient. The polypeptide is Membrane-bound ghrelin O-acyltransferase mboat4 (Danio rerio (Zebrafish)).